We begin with the raw amino-acid sequence, 115 residues long: Autophagy-related protein 8i (115 aa).

The Phosphatidylethanolamine amidated glycine moiety is linked to residue glycine 115.

Belongs to the ATG8 family. In terms of assembly, interacts with ATG4. Interacts with NBR1. Gly-115 forms then a thioester bond with the 'Cys-558' of ATG7 (E1-like activating enzyme) before being transferred to the 'Cys-258' of ATG3 (the specific E2 conjugating enzyme), in order to be finally amidated with phosphatidylethanolamine. This lipid modification anchors ATG8 to autophagosomes. Constitutively expressed.

The protein resides in the cytoplasmic vesicle. It is found in the autophagosome membrane. The protein localises to the vacuole membrane. Its subcellular location is the cytoplasm. It localises to the cytoskeleton. Its function is as follows. Ubiquitin-like modifier involved in autophagosomes formation. May mediate the delivery of the autophagosomes to the vacuole via the microtubule cytoskeleton. The polypeptide is Autophagy-related protein 8i (ATG8I) (Arabidopsis thaliana (Mouse-ear cress)).